The sequence spans 27 residues: Cupiennin-3c (27 aa).

As to expression, expressed by the venom gland.

The protein resides in the secreted. The sequence is that of Cupiennin-3c from Cupiennius salei (American wandering spider).